The primary structure comprises 98 residues: Small ribosomal subunit protein uS19 (98 aa).

A disordered region spans residues 77–98 (TRTFRGHAGGKAEKGGSAPRKK).

This sequence belongs to the universal ribosomal protein uS19 family.

Protein S19 forms a complex with S13 that binds strongly to the 16S ribosomal RNA. The polypeptide is Small ribosomal subunit protein uS19 (Chlorobium limicola (strain DSM 245 / NBRC 103803 / 6330)).